The primary structure comprises 250 residues: Probable transcriptional regulatory protein Cpha266_0538 (250 aa).

It belongs to the TACO1 family.

It localises to the cytoplasm. This chain is Probable transcriptional regulatory protein Cpha266_0538, found in Chlorobium phaeobacteroides (strain DSM 266 / SMG 266 / 2430).